The chain runs to 239 residues: Uridylate kinase (239 aa).

Residue Lys10–Gly13 participates in ATP binding. The segment at Gly18 to Gly23 is involved in allosteric activation by GTP. Residue Gly52 coordinates UMP. The ATP site is built by Gly53 and Arg57. UMP contacts are provided by residues Asp73 and Thr134–Thr141. 3 residues coordinate ATP: Thr161, Tyr167, and Asp170.

It belongs to the UMP kinase family. Homohexamer.

The protein resides in the cytoplasm. The catalysed reaction is UMP + ATP = UDP + ADP. Its pathway is pyrimidine metabolism; CTP biosynthesis via de novo pathway; UDP from UMP (UMPK route): step 1/1. With respect to regulation, allosterically activated by GTP. Inhibited by UTP. In terms of biological role, catalyzes the reversible phosphorylation of UMP to UDP. In Campylobacter jejuni subsp. jejuni serotype O:2 (strain ATCC 700819 / NCTC 11168), this protein is Uridylate kinase.